The primary structure comprises 444 residues: Na(+)-translocating NADH-quinone reductase subunit A (444 aa).

It belongs to the NqrA family. Composed of six subunits; NqrA, NqrB, NqrC, NqrD, NqrE and NqrF.

The catalysed reaction is a ubiquinone + n Na(+)(in) + NADH + H(+) = a ubiquinol + n Na(+)(out) + NAD(+). In terms of biological role, NQR complex catalyzes the reduction of ubiquinone-1 to ubiquinol by two successive reactions, coupled with the transport of Na(+) ions from the cytoplasm to the periplasm. NqrA to NqrE are probably involved in the second step, the conversion of ubisemiquinone to ubiquinol. This is Na(+)-translocating NADH-quinone reductase subunit A from Shewanella frigidimarina (strain NCIMB 400).